The chain runs to 251 residues: Eukaryotic translation initiation factor 3 subunit K (251 aa).

One can recognise a PCI domain in the interval 46 to 224 (FDCYANLALL…VKVPTNKENE (179 aa)).

The protein belongs to the eIF-3 subunit K family. As to quaternary structure, component of the eukaryotic translation initiation factor 3 (eIF-3) complex.

It is found in the cytoplasm. In terms of biological role, component of the eukaryotic translation initiation factor 3 (eIF-3) complex, which is involved in protein synthesis of a specialized repertoire of mRNAs and, together with other initiation factors, stimulates binding of mRNA and methionyl-tRNAi to the 40S ribosome. The eIF-3 complex specifically targets and initiates translation of a subset of mRNAs involved in cell proliferation. The chain is Eukaryotic translation initiation factor 3 subunit K from Aspergillus oryzae (strain ATCC 42149 / RIB 40) (Yellow koji mold).